The sequence spans 195 residues: Myelin-associated neurite-outgrowth inhibitor (195 aa).

N-acetylmethionine is present on M1. The Cytoplasmic segment spans residues 1–18 (MNPVYSPGSSGVPYANAK). Phosphoserine is present on S6. A helical transmembrane segment spans residues 19–42 (GIGYPAGFPMGYAAAAPAYSPNMY). Residues 43–142 (PGANPTFQAG…PAPLPPPRGN (100 aa)) are Extracellular-facing. N-linked (GlcNAc...) asparagine glycosylation is present at N46. Residues 143–164 (GVTMGMVAGTTMAMSAGTLLTA) traverse the membrane as a helical segment. At 165–195 (HSPTPVAPHPVTVPTYRAPGTPTYSYVPPQW) the chain is on the cytoplasmic side.

This sequence belongs to the FAM168 family. May form homodimers. May interact with DAZAP2, FAM168A, PRDX6, RBM6, TMTC1 and YPEL2. Interacts with CDC27. Post-translationally, N-glycosylated.

The protein resides in the cytoplasm. The protein localises to the perinuclear region. It is found in the cell membrane. Its subcellular location is the cell projection. It localises to the axon. In terms of biological role, inhibitor of neuronal axonal outgrowth. Acts as a negative regulator of CDC42 and STAT3 and a positive regulator of STMN2. Positive regulator of CDC27. In Bos taurus (Bovine), this protein is Myelin-associated neurite-outgrowth inhibitor (FAM168B).